Reading from the N-terminus, the 672-residue chain is Zinc finger and BTB domain-containing protein 24 (672 aa).

The 67-residue stretch at 39 to 105 (CDITLIVEDV…MYSAVVLVDE (67 aa)) folds into the BTB domain. Positions 136-208 (HMQVKRKRGR…GKRKIKQPIR (73 aa)) are disordered. Positions 140–152 (KRKRGRPKKNQDL) form a DNA-binding region, a.T hook 1. Residues 148-158 (KNQDLSQKENP) are compositionally biased toward basic and acidic residues. Residues 160-171 (SELQAQTSSEIQ) are compositionally biased toward polar residues. Residues 198–208 (EGKRKIKQPIR) show a composition bias toward basic residues. Positions 223–235 (PGKRGRRRKYPDT) form a DNA-binding region, a.T hook 2. C2H2-type zinc fingers lie at residues 237 to 259 (ARCE…QRTH), 265 to 287 (FRCS…QRMH), 293 to 315 (YICT…MNLH), 321 to 343 (FTCE…NRVH), 349 to 371 (PECA…LRTH), 377 to 399 (FTCE…IRIH), 405 to 427 (YVCK…EVSH), and 433 to 455 (FSCS…IKTH). Residues 453-492 (KTHNKENPPAQAESTDKPPQSAPEQQEQEQQQQQQTSGDK) form a disordered region. Over residues 476 to 487 (EQQEQEQQQQQQ) the composition is skewed to low complexity.

It belongs to the krueppel C2H2-type zinc-finger protein family.

The protein resides in the nucleus. Functionally, may be involved in BMP2-induced transcription. The chain is Zinc finger and BTB domain-containing protein 24 (zbtb24) from Danio rerio (Zebrafish).